We begin with the raw amino-acid sequence, 417 residues long: Serine hydroxymethyltransferase (417 aa).

(6S)-5,6,7,8-tetrahydrofolate contacts are provided by residues L121 and 125-127 (GHL). Residue K230 is modified to N6-(pyridoxal phosphate)lysine. 355–357 (SPF) lines the (6S)-5,6,7,8-tetrahydrofolate pocket.

The protein belongs to the SHMT family. Homodimer. Requires pyridoxal 5'-phosphate as cofactor.

The protein resides in the cytoplasm. It catalyses the reaction (6R)-5,10-methylene-5,6,7,8-tetrahydrofolate + glycine + H2O = (6S)-5,6,7,8-tetrahydrofolate + L-serine. It participates in one-carbon metabolism; tetrahydrofolate interconversion. The protein operates within amino-acid biosynthesis; glycine biosynthesis; glycine from L-serine: step 1/1. Its function is as follows. Catalyzes the reversible interconversion of serine and glycine with tetrahydrofolate (THF) serving as the one-carbon carrier. This reaction serves as the major source of one-carbon groups required for the biosynthesis of purines, thymidylate, methionine, and other important biomolecules. Also exhibits THF-independent aldolase activity toward beta-hydroxyamino acids, producing glycine and aldehydes, via a retro-aldol mechanism. The polypeptide is Serine hydroxymethyltransferase (Legionella pneumophila (strain Corby)).